The primary structure comprises 306 residues: Pantothenate kinase (306 aa).

91 to 98 is an ATP binding site; sequence GSVAVGKS.

Belongs to the prokaryotic pantothenate kinase family.

Its subcellular location is the cytoplasm. The enzyme catalyses (R)-pantothenate + ATP = (R)-4'-phosphopantothenate + ADP + H(+). The protein operates within cofactor biosynthesis; coenzyme A biosynthesis; CoA from (R)-pantothenate: step 1/5. The polypeptide is Pantothenate kinase (coaA) (Streptococcus pyogenes serotype M3 (strain ATCC BAA-595 / MGAS315)).